The primary structure comprises 441 residues: Proline--tRNA ligase (441 aa).

It belongs to the class-II aminoacyl-tRNA synthetase family. ProS type 2 subfamily. Homodimer.

The protein resides in the cytoplasm. The enzyme catalyses tRNA(Pro) + L-proline + ATP = L-prolyl-tRNA(Pro) + AMP + diphosphate. Its function is as follows. Catalyzes the attachment of proline to tRNA(Pro) in a two-step reaction: proline is first activated by ATP to form Pro-AMP and then transferred to the acceptor end of tRNA(Pro). The sequence is that of Proline--tRNA ligase from Bartonella quintana (strain Toulouse) (Rochalimaea quintana).